A 290-amino-acid chain; its full sequence is Concanavalin-A (290 aa).

Positions 1-29 (MAISKKSSLFLPIFTFITMFLMVVNKVSS) are cleaved as a signal peptide. Residues Asp-119 and Arg-139 each coordinate a carbohydrate. Residue Asp-119 coordinates Ca(2+). Positions 149-163 (VIRNSTTIDFNAAYN) are excised as a propeptide. Asn-152 carries N-linked (GlcNAc...) asparagine glycosylation. The Mn(2+) site is built by Glu-171 and Asp-173. Ca(2+)-binding residues include Asp-173, Tyr-175, Asn-177, and Asp-182. Residues Asp-182 and His-187 each coordinate Mn(2+). 262–263 (LY) contacts a carbohydrate. The propeptide occupies 282-290 (EIPDIATVV).

It belongs to the leguminous lectin family. Homotetramer. The mature chain consists of residues 164-281 followed by 30-148. To form a mature chain the precursor undergoes further post-translational modification after removal of the signal sequence; cleavage after Asn at positions Asn-148, Asn-163, and Asn-281 is followed by transposition and ligation (By formation of a new peptide bond) of residues 164-281 and 30-148.

Glucose/D-mannose/rhamnose specific lectin. Has hemagglutinating activity towards rabbit erythrocytes. Has mitogenic activity towards murine splenocytes that is inhibited by glucose. Inhibits HIV-1 reverse transcriptase with an IC(50) of 35 uM. Has a potent antiproliferative activity against L1210 leukemia cells in vitro that is not inhibited by glucose. Inhibits translation in cell-free rabbit reticulocyte system with an IC(50) of 2.08 uM. Lacks anti-fungal activity against M.arachidicola, B.cenera and F.oxysporum. The sequence is that of Concanavalin-A from Canavalia gladiata (Sword bean).